A 1444-amino-acid polypeptide reads, in one-letter code: Probable serine/threonine-protein kinase irlC (1444 aa).

Positions 335-370 (TLINNNNNNNNNNNNNNNNNNNNNNNNNNNNNNNSK) are disordered. Positions 338–368 (NNNNNNNNNNNNNNNNNNNNNNNNNNNNNNN) are enriched in low complexity. Residues 495-529 (FTFYLSFGEIFTCSCEDYKREFSCKHMFFILLNYY) form an SWIM-type zinc finger. A compositionally biased stretch (low complexity) spans 584–613 (TSPFQSINNNNNNNLNNNNNNNLNNNNNNE). Disordered regions lie at residues 584–619 (TSPF…NKFK) and 864–938 (QKEK…ITPI). Coiled coils occupy residues 593-620 (NNNN…KFKE) and 847-879 (IKAE…KSKI). Positions 864-876 (QKEKKKQKQKQSK) are enriched in basic residues. Over residues 885–937 (SSSSSSSSSPSTSNTTITSTTPTTTTTTTTTTTPTTTTTTTTTSSPKQKPITP) the composition is skewed to low complexity. In terms of domain architecture, Protein kinase spans 981-1246 (RKEENVLGRG…IEKILLHPFF (266 aa)). ATP contacts are provided by residues 987–995 (LGRGSNGTL) and Lys1010. The Proton acceptor role is filled by Asp1116. Residues 1279-1444 (NYQEINLKNN…LIYFNDLIIK (166 aa)) enclose the KEN domain.

This sequence belongs to the protein kinase superfamily. Ser/Thr protein kinase family.

The enzyme catalyses L-seryl-[protein] + ATP = O-phospho-L-seryl-[protein] + ADP + H(+). The catalysed reaction is L-threonyl-[protein] + ATP = O-phospho-L-threonyl-[protein] + ADP + H(+). The polypeptide is Probable serine/threonine-protein kinase irlC (irlC) (Dictyostelium discoideum (Social amoeba)).